We begin with the raw amino-acid sequence, 419 residues long: Effector protein BipC (419 aa).

Disordered stretches follow at residues 62-91 and 338-402; these read VAGSGAQRVELARPKPDAQTRATDRRTVSG and LQSG…AKSQ. Composition is skewed to basic and acidic residues over residues 71–91 and 380–392; these read ELARPKPDAQTRATDRRTVSG and TRDEAAHRSREAA.

Belongs to the SctB/SipC family.

Its subcellular location is the secreted. This chain is Effector protein BipC (bipC), found in Burkholderia pseudomallei (strain 1106a).